We begin with the raw amino-acid sequence, 306 residues long: tRNA dimethylallyltransferase 2 (306 aa).

Residue 11 to 18 (GPTASGKT) coordinates ATP. 13-18 (TASGKT) lines the substrate pocket. Residues 36 to 39 (DSRQ) are interaction with substrate tRNA.

Belongs to the IPP transferase family. As to quaternary structure, monomer. Mg(2+) serves as cofactor.

The catalysed reaction is adenosine(37) in tRNA + dimethylallyl diphosphate = N(6)-dimethylallyladenosine(37) in tRNA + diphosphate. In terms of biological role, catalyzes the transfer of a dimethylallyl group onto the adenine at position 37 in tRNAs that read codons beginning with uridine, leading to the formation of N6-(dimethylallyl)adenosine (i(6)A). The sequence is that of tRNA dimethylallyltransferase 2 from Bacteroides fragilis (strain ATCC 25285 / DSM 2151 / CCUG 4856 / JCM 11019 / LMG 10263 / NCTC 9343 / Onslow / VPI 2553 / EN-2).